The primary structure comprises 695 residues: uncharacterized protein (695 aa).

2 disordered regions span residues M1 to K112 and M242 to H262. The segment covering D32–S47 has biased composition (low complexity). Over residues K96–Q107 the composition is skewed to basic and acidic residues. A tr-type G domain is found at K278–H492. GTP-binding positions include G287 to K294, I357 to N361, and T417 to D420.

This sequence belongs to the TRAFAC class translation factor GTPase superfamily. Classic translation factor GTPase family.

The protein localises to the cytoplasm. It is found in the nucleus. This is an uncharacterized protein from Schizosaccharomyces pombe (strain 972 / ATCC 24843) (Fission yeast).